The sequence spans 446 residues: Glycogen synthase (446 aa).

An ADP-alpha-D-glucose-binding site is contributed by arginine 15.

It belongs to the glycosyltransferase 1 family. Bacterial/plant glycogen synthase subfamily.

It catalyses the reaction [(1-&gt;4)-alpha-D-glucosyl](n) + ADP-alpha-D-glucose = [(1-&gt;4)-alpha-D-glucosyl](n+1) + ADP + H(+). It functions in the pathway glycan biosynthesis; glycogen biosynthesis. Synthesizes alpha-1,4-glucan chains using ADP-glucose. The sequence is that of Glycogen synthase from Deinococcus deserti (strain DSM 17065 / CIP 109153 / LMG 22923 / VCD115).